Consider the following 452-residue polypeptide: Deoxybrevianamide E synthase notF (452 aa).

The segment covering 1–19 has biased composition (basic and acidic residues); that stretch reads MTAPELRVDTFRAPEDAPK. The disordered stretch occupies residues 1 to 38; the sequence is MTAPELRVDTFRAPEDAPKEPSAQQPRLPSSPSPAQAL. The segment covering 21-38 has biased composition (low complexity); sequence PSAQQPRLPSSPSPAQAL. Residue Glu108 participates in brevianamide F binding. Positions 122, 212, 214, 282, 284, 371, 436, and 440 each coordinate dimethylallyl diphosphate.

This sequence belongs to the tryptophan dimethylallyltransferase family. In terms of assembly, monomer.

It catalyses the reaction brevianamide F + dimethylallyl diphosphate = deoxybrevianamide E + diphosphate. It functions in the pathway alkaloid biosynthesis. Addition of 5 mM Mg(2+), Ca(2+) or Mn(2+) slightly enhances catalysis (about 100-120%). Significant reduction of enzyme activity (2%-35%) is observed with Cu(2+), Zn(2+), Fe(2+), or Sn(2+) (5 mM). Functionally, deoxybrevianamide E synthase; part of the gene cluster that mediates the biosynthesis of notoamide, a fungal indole alkaloid that belongs to a family of natural products containing a characteristic bicyclo[2.2.2]diazaoctane core. The first step of notoamide biosynthesis involves coupling of L-proline and L-tryptophan by the bimodular NRPS notE, to produce cyclo-L-tryptophan-L-proline called brevianamide F. The reverse prenyltransferase notF then acts as a deoxybrevianamide E synthase and converts brevianamide F to deoxybrevianamide E via reverse prenylation at C-2 of the indole ring leading to the bicyclo[2.2.2]diazaoctane core. Deoxybrevianamide E is further hydroxylated at C-6 of the indole ring, likely catalyzed by the cytochrome P450 monooxygenase notG, to yield 6-hydroxy-deoxybrevianamide E. 6-hydroxy-deoxybrevianamide E is a specific substrate of the prenyltransferase notC for normal prenylation at C-7 to produce 6-hydroxy-7-prenyl-deoxybrevianamide, also called notoamide S. As the proposed pivotal branching point in notoamide biosynthesis, notoamide S can be diverted to notoamide E through an oxidative pyran ring closure putatively catalyzed by either notH cytochrome P450 monooxygenase or the notD FAD-linked oxidoreductase. This step would be followed by an indole 2,3-epoxidation-initiated pinacol-like rearrangement catalyzed by the notB FAD-dependent monooxygenase leading to the formation of notoamide C and notoamide D. On the other hand notoamide S is converted to notoamide T by notH (or notD), a bifunctional oxidase that also functions as the intramolecular Diels-Alderase responsible for generation of (+)-notoamide T. To generate antipodal (-)-notoaminide T, notH' (or notD') in Aspergillus versicolor is expected to catalyze a Diels-Alder reaction leading to the opposite stereochemistry. The remaining oxidoreductase notD (or notH) likely catalyzes the oxidative pyran ring formation to yield (+)-stephacidin A. The FAD-dependent monooxygenase notI is highly similar to notB and is predicted to catalyze a similar conversion from (+)-stephacidin A to (-)-notoamide B via the 2,3-epoxidation of (+)-stephacidin A followed by a pinacol-type rearrangement. Finally, it remains unclear which enzyme could be responsible for the final hydroxylation steps leading to notoamide A and sclerotiamide. In Aspergillus sp. (strain MF297-2), this protein is Deoxybrevianamide E synthase notF.